Consider the following 298-residue polypeptide: Bifunctional protein FolD (298 aa).

Residues 165 to 167, Ser190, and Ile231 contribute to the NADP(+) site; that span reads GRS.

This sequence belongs to the tetrahydrofolate dehydrogenase/cyclohydrolase family. In terms of assembly, homodimer.

It catalyses the reaction (6R)-5,10-methylene-5,6,7,8-tetrahydrofolate + NADP(+) = (6R)-5,10-methenyltetrahydrofolate + NADPH. The enzyme catalyses (6R)-5,10-methenyltetrahydrofolate + H2O = (6R)-10-formyltetrahydrofolate + H(+). It participates in one-carbon metabolism; tetrahydrofolate interconversion. In terms of biological role, catalyzes the oxidation of 5,10-methylenetetrahydrofolate to 5,10-methenyltetrahydrofolate and then the hydrolysis of 5,10-methenyltetrahydrofolate to 10-formyltetrahydrofolate. The protein is Bifunctional protein FolD of Prochlorococcus marinus (strain AS9601).